The sequence spans 507 residues: MSTDGESPEEPGWKAVASPKASAMPEKRGSAQAASSSWLQGFGQPSVYHAAFVIFFEFFAWGLLTTPMLTVLHETFPQHTFLMNGLIQGVKGLLSFLSAPLIGALSDVWGRKPFLLGTVFFTCFPIPLMRISPWWYFGMISVSGVFSVTFSVIFAYVADFTQEHERSTAYGWVSATFAASLVSSPAIGTYLSSNYGDSLVVLVATVVALLDICFILVAVPESLPEKIRPASWGAQISWKQADPFASLKKVGKDSTVLLICITVFLSYLPEAGQYSSFFLYLRQVIGFGSVKIVAFIAMVGILSILAQTVFLSKLMRSLGNKNTVLLGLGFQILQLAWYGFGAQAWMMWAAGTVAAMSSITFPAVSALISRNAESDQQGVAQGIITGIRGLCNGLGPALYGFIFYLFHVELNELGPKLDSDNDPLQGAFIPGPPFLFGACIVLMSFLVALFIPEYRKTGGVQKHNNSISGSLSTPPERGSDEDIEPLLQDSNIWELSSEEPGNQCTEL.

Residues 1-22 (MSTDGESPEEPGWKAVASPKAS) are disordered. Residues 1–51 (MSTDGESPEEPGWKAVASPKASAMPEKRGSAQAASSSWLQGFGQPSVYHAA) are Extracellular-facing. Residues 52-72 (FVIFFEFFAWGLLTTPMLTVL) traverse the membrane as a helical segment. Topologically, residues 73 to 84 (HETFPQHTFLMN) are cytoplasmic. Residues 85–105 (GLIQGVKGLLSFLSAPLIGAL) traverse the membrane as a helical segment. The Extracellular segment spans residues 106–113 (SDVWGRKP). A helical membrane pass occupies residues 114-134 (FLLGTVFFTCFPIPLMRISPW). The Cytoplasmic segment spans residues 135–136 (WY). The helical transmembrane segment at 137 to 157 (FGMISVSGVFSVTFSVIFAYV) threads the bilayer. Residues 158 to 170 (ADFTQEHERSTAY) lie on the Extracellular side of the membrane. The helical transmembrane segment at 171 to 191 (GWVSATFAASLVSSPAIGTYL) threads the bilayer. Over 192–198 (SSNYGDS) the chain is Cytoplasmic. A helical transmembrane segment spans residues 199 to 219 (LVVLVATVVALLDICFILVAV). Over 220–257 (PESLPEKIRPASWGAQISWKQADPFASLKKVGKDSTVL) the chain is Extracellular. The helical transmembrane segment at 258 to 278 (LICITVFLSYLPEAGQYSSFF) threads the bilayer. Residues 279 to 283 (LYLRQ) are Cytoplasmic-facing. Residues 284–304 (VIGFGSVKIVAFIAMVGILSI) traverse the membrane as a helical segment. Residues 305-323 (LAQTVFLSKLMRSLGNKNT) are Extracellular-facing. A helical transmembrane segment spans residues 324–344 (VLLGLGFQILQLAWYGFGAQA). Residues 345–347 (WMM) are Cytoplasmic-facing. Residues 348 to 368 (WAAGTVAAMSSITFPAVSALI) traverse the membrane as a helical segment. Over 369-389 (SRNAESDQQGVAQGIITGIRG) the chain is Extracellular. The helical transmembrane segment at 390–410 (LCNGLGPALYGFIFYLFHVEL) threads the bilayer. Over 411–430 (NELGPKLDSDNDPLQGAFIP) the chain is Cytoplasmic. The chain crosses the membrane as a helical span at residues 431-451 (GPPFLFGACIVLMSFLVALFI). Residues 452–507 (PEYRKTGGVQKHNNSISGSLSTPPERGSDEDIEPLLQDSNIWELSSEEPGNQCTEL) lie on the Extracellular side of the membrane. Positions 462–473 (KHNNSISGSLST) are enriched in polar residues. Residues 462–483 (KHNNSISGSLSTPPERGSDEDI) are disordered. Asparagine 464 carries an N-linked (GlcNAc...) asparagine glycan.

Belongs to the major facilitator superfamily.

The protein localises to the membrane. The protein is Hippocampus abundant transcript-like protein 1 of Rattus norvegicus (Rat).